We begin with the raw amino-acid sequence, 159 residues long: NADH-quinone oxidoreductase subunit B (159 aa).

Cys-37, Cys-38, Cys-102, and Cys-132 together coordinate [4Fe-4S] cluster.

Belongs to the complex I 20 kDa subunit family. As to quaternary structure, NDH-1 is composed of 14 different subunits. Subunits NuoB, C, D, E, F, and G constitute the peripheral sector of the complex. It depends on [4Fe-4S] cluster as a cofactor.

It localises to the cell inner membrane. The enzyme catalyses a quinone + NADH + 5 H(+)(in) = a quinol + NAD(+) + 4 H(+)(out). NDH-1 shuttles electrons from NADH, via FMN and iron-sulfur (Fe-S) centers, to quinones in the respiratory chain. Couples the redox reaction to proton translocation (for every two electrons transferred, four hydrogen ions are translocated across the cytoplasmic membrane), and thus conserves the redox energy in a proton gradient. This chain is NADH-quinone oxidoreductase subunit B, found in Paraburkholderia phymatum (strain DSM 17167 / CIP 108236 / LMG 21445 / STM815) (Burkholderia phymatum).